A 197-amino-acid polypeptide reads, in one-letter code: Large ribosomal subunit protein bL25 (197 aa).

This sequence belongs to the bacterial ribosomal protein bL25 family. CTC subfamily. Part of the 50S ribosomal subunit; part of the 5S rRNA/L5/L18/L25 subcomplex. Contacts the 5S rRNA. Binds to the 5S rRNA independently of L5 and L18.

In terms of biological role, this is one of the proteins that binds to the 5S RNA in the ribosome where it forms part of the central protuberance. The chain is Large ribosomal subunit protein bL25 from Streptomyces avermitilis (strain ATCC 31267 / DSM 46492 / JCM 5070 / NBRC 14893 / NCIMB 12804 / NRRL 8165 / MA-4680).